The primary structure comprises 137 residues: Cytochrome c-type biogenesis protein CcmE (137 aa).

Over 1 to 8 (MQKGAKNR) the chain is Cytoplasmic. The chain crosses the membrane as a helical; Signal-anchor for type II membrane protein span at residues 9 to 29 (LITIIICFCSAVIGVSIILYN). Over 30 to 137 (LEKSIVFFVP…NTVIPAKAGI (108 aa)) the chain is Periplasmic. Residues His120 and Tyr124 each contribute to the heme site.

Belongs to the CcmE/CycJ family.

The protein localises to the cell inner membrane. Functionally, heme chaperone required for the biogenesis of c-type cytochromes. Transiently binds heme delivered by CcmC and transfers the heme to apo-cytochromes in a process facilitated by CcmF and CcmH. This is Cytochrome c-type biogenesis protein CcmE from Rickettsia bellii (strain OSU 85-389).